The sequence spans 633 residues: Probable potassium transport system protein Kup 3 (633 aa).

11 helical membrane passes run 61-81 (LVSL…VLFL), 107-127 (PVLM…DAMI), 143-163 (VAPA…LLLF), 173-193 (VSVF…AAGV), 211-231 (AIGF…AIFL), 255-275 (WFAV…ALVL), 287-307 (LMFP…GTII), 345-365 (IYLP…MLMF), 371-391 (LAPA…ILAF), 402-422 (ALTA…FLGA), and 427-447 (IHHG…MMWT).

Belongs to the HAK/KUP transporter (TC 2.A.72) family.

The protein localises to the cell inner membrane. The enzyme catalyses K(+)(in) + H(+)(in) = K(+)(out) + H(+)(out). Its function is as follows. Transport of potassium into the cell. Likely operates as a K(+):H(+) symporter. This Sinorhizobium medicae (strain WSM419) (Ensifer medicae) protein is Probable potassium transport system protein Kup 3.